We begin with the raw amino-acid sequence, 231 residues long: Acyltransferase PGAP2 (231 aa).

Residues 1-22 (MQQVPYGSVDRDKPLIRVPFTR) are Cytoplasmic-facing. A helical membrane pass occupies residues 23–43 (LAVITVCLPLLGLVACIVLAM). Residues 44-78 (LYHYNDATYTHCQVPNYLPSISAAISLTPERYIWR) lie on the Lumenal side of the membrane. The chain crosses the membrane as a helical span at residues 79-99 (FSIGLHSAPRFLVAAAYLSFY). Over 100–110 (RGRFSRRLTEQ) the chain is Cytoplasmic. The helical transmembrane segment at 111–131 (LLSGFTFLLALSENVGLLLLT) threads the bilayer. Residues 132–146 (YVSSTETYSVHKSGF) are Lumenal-facing. A helical membrane pass occupies residues 147–167 (ILFIGSSLFHMLCTCKLWSLI). The Cytoplasmic portion of the chain corresponds to 168-179 (VKYSISSEEMMS). The helical transmembrane segment at 180-200 (YWFKLRLFLFNGGCCVLAVYF) threads the bilayer. Residues 201–231 (YRRHNTYCEEGITHASRCVSIWWCCPTWPST) lie on the Lumenal side of the membrane.

This sequence belongs to the PGAP2 family.

It is found in the golgi apparatus membrane. Functionally, involved in the fatty acid remodeling steps of GPI-anchor maturation where the unsaturated acyl chain at sn-2 of inositol phosphate is replaced by a saturated stearoyl chain. May catalyze the second step of the fatty acid remodeling, by reacylating a lyso-GPI intermediate at sn-2 of inositol phosphate by a saturated chain. The fatty acid remodeling steps is critical for the integration of GPI-APs into lipid rafts. The sequence is that of Acyltransferase PGAP2 from Danio rerio (Zebrafish).